The sequence spans 648 residues: MADNTGTDNKGTGCSGWFLVEAIVDRKTGEEISDDEDETVEDSGLDMVDFIDDRCITHNSLEAQALLNEQEADAHYAAVQDLKRKYLGSPYVSPLGHIEQSVECDISPRLNAIQLSRKPKKVKRRLFQSREITDSGYGHTEVEVEAATQVERHGEPENGCGGGGHGRDKEGEGQVHTEVHTESEIEHHTGTTRVLELLKCKDIRATLHGKFKQCYGLSFTDLIRQFKSNKTTCEDWVVAAFGVHHSVSEAFEKLIQPLTIYRHIQWLTNEWGMLLLVLLRFKVNKNRCTVARTLATLLNIPEDHMLIEPPKIQSSVAALYWFRTSLSNASIVTGETPEWIARQTIVEHGLADSQFKLTEMVQWAYDNDYCDECDIAFEYAKRADFDSNAKAFLNSNCQAKYVKDCATMCKHYKNAEMKKMTMNQWIKHRSKKIDETGNWKPIVQFLRHQNIEFISFLSKLKLWLQGTPKKNCIAIVGPPDTGKSMFCMSLIKFLGGTVISYVNSSSHFWLQPLCNTKVALLDDATHSCWGYMDTYMRNLLDGNPMSIDRKHKSLALIKCPPLLVTSNIDITTEEKYKYLYSRVTVFKFPNPFPFDRNGNAVYELCDANWKCFFARLSASLDIQDSEDEDDGDTSQAFRCVPGTVVRTV.

Positions 83-85 (KRK) match the Nuclear localization signal motif. Residues S89, S93, and S107 each carry the phosphoserine; by host modification. The Nuclear export signal signature appears at 106–115 (ISPRLNAIQL). The interval 153–188 (HGEPENGCGGGGHGRDKEGEGQVHTEVHTESEIEHH) is disordered. The segment covering 165–188 (HGRDKEGEGQVHTEVHTESEIEHH) has biased composition (basic and acidic residues). Positions 186-352 (EHHTGTTRVL…QTIVEHGLAD (167 aa)) are DNA-binding region. The 151-residue stretch at 451–601 (IEFISFLSKL…FPFDRNGNAV (151 aa)) folds into the SF3 helicase domain. 477 to 484 (GPPDTGKS) is an ATP binding site. K558 is covalently cross-linked (Glycyl lysine isopeptide (Lys-Gly) (interchain with G-Cter in SUMO)).

The protein belongs to the papillomaviridae E1 protein family. In terms of assembly, can form hexamers. Interacts with E2 protein; this interaction increases E1 DNA binding specificity. Interacts with host DNA polymerase subunit POLA2. Interacts with host single stranded DNA-binding protein RPA1. Interacts with host TOP1; this interaction stimulates the enzymatic activity of TOP1. In terms of processing, phosphorylated. Sumoylated.

It localises to the host nucleus. It catalyses the reaction Couples ATP hydrolysis with the unwinding of duplex DNA by translocating in the 3'-5' direction.. The enzyme catalyses ATP + H2O = ADP + phosphate + H(+). Functionally, ATP-dependent DNA 3'-5' helicase required for initiation of viral DNA replication. It forms a complex with the viral E2 protein. The E1-E2 complex binds to the replication origin which contains binding sites for both proteins. During the initial step, a dimer of E1 interacts with a dimer of protein E2 leading to a complex that binds the viral origin of replication with high specificity. Then, a second dimer of E1 displaces the E2 dimer in an ATP-dependent manner to form the E1 tetramer. Following this, two E1 monomers are added to each half of the site, which results in the formation of two E1 trimers on the viral ori. Subsequently, two hexamers will be created. The double hexamer acts as a bi-directional helicase machinery and unwinds the viral DNA and then recruits the host DNA polymerase to start replication. The chain is Replication protein E1 from Pan paniscus (Pygmy chimpanzee).